The primary structure comprises 153 residues: 6,7-dimethyl-8-ribityllumazine synthase (153 aa).

Residues Trp22, 56-58, and 80-82 each bind 5-amino-6-(D-ribitylamino)uracil; these read SYE and AVI. 85-86 serves as a coordination point for (2S)-2-hydroxy-3-oxobutyl phosphate; it reads AT. His88 serves as the catalytic Proton donor. Leu113 provides a ligand contact to 5-amino-6-(D-ribitylamino)uracil. Arg127 serves as a coordination point for (2S)-2-hydroxy-3-oxobutyl phosphate.

Belongs to the DMRL synthase family.

It catalyses the reaction (2S)-2-hydroxy-3-oxobutyl phosphate + 5-amino-6-(D-ribitylamino)uracil = 6,7-dimethyl-8-(1-D-ribityl)lumazine + phosphate + 2 H2O + H(+). Its pathway is cofactor biosynthesis; riboflavin biosynthesis; riboflavin from 2-hydroxy-3-oxobutyl phosphate and 5-amino-6-(D-ribitylamino)uracil: step 1/2. In terms of biological role, catalyzes the formation of 6,7-dimethyl-8-ribityllumazine by condensation of 5-amino-6-(D-ribitylamino)uracil with 3,4-dihydroxy-2-butanone 4-phosphate. This is the penultimate step in the biosynthesis of riboflavin. The sequence is that of 6,7-dimethyl-8-ribityllumazine synthase from Herpetosiphon aurantiacus (strain ATCC 23779 / DSM 785 / 114-95).